Here is a 317-residue protein sequence, read N- to C-terminus: Apolipoprotein E (317 aa).

A signal peptide spans 1 to 18 (MKVLWAALLVTFLAGCQA). Residues Thr-26 and Thr-36 are each glycosylated (O-linked (GalNAc...) threonine). A run of 8 repeats spans residues 80–101 (ALMD…EQLT), 102–123 (PVAE…ARLG), 124–145 (ADME…AMLG), 146–167 (QSTE…KRLL), 168–189 (RDAD…EGAE), 190–211 (RGLS…VRAA), 212–233 (TVGS…ERLR), and 234–255 (ARME…EQVA). The 8 X 22 AA approximate tandem repeats stretch occupies residues 80 to 255 (ALMDETMKEL…RLDEVKEQVA (176 aa)). The N-linked (Glc) (glycation) lysine glycan is linked to Lys-93. Residue Met-143 is modified to Methionine sulfoxide. Ser-147 is subject to Phosphoserine; by FAM20C. The LDL and other lipoprotein receptors binding stretch occupies residues 158–168 (HLRKLRKRLLR). 162-165 (LRKR) is a heparin binding site. Residues 210-290 (AATVGSLAGQ…SWFEPLVEDM (81 aa)) are lipid-binding and lipoprotein association. An O-linked (GalNAc...) threonine glycan is attached at Thr-212. Position 229-236 (229-236 (GERLRARM)) interacts with heparin. A homooligomerization region spans residues 266-317 (QQIRLQAEAFQARLKSWFEPLVEDMQRQWAGLVEKVQAAVGTSAAPVPSDNH). The interval 278–290 (RLKSWFEPLVEDM) is specificity for association with VLDL. An O-linked (GalNAc...) threonine glycan is attached at Thr-307. 2 O-linked (GalNAc...) serine glycosylation sites follow: Ser-308 and Ser-314.

The protein belongs to the apolipoprotein A1/A4/E family. Homotetramer. May interact with ABCA1; functionally associated with ABCA1 in the biogenesis of HDLs. May interact with APP/A4 amyloid-beta peptide; the interaction is extremely stable in vitro but its physiological significance is unclear. May interact with MAPT. May interact with MAP2. In the cerebrospinal fluid, interacts with secreted SORL1. Interacts with PMEL; this allows the loading of PMEL luminal fragment on ILVs to induce fibril nucleation. As to quaternary structure, (Microbial infection) Interacts with hepatitis C virus (HCV) envelope glycoprotein E2; this interaction is required for HCV infectivity and production. Post-translationally, APOE exists as multiple glycosylated and sialylated glycoforms within cells and in plasma. The extent of glycosylation and sialylation are tissue and context specific. Plasma APOE undergoes desialylation and is less glycosylated and sialylated than the cellular form. Glycosylation is not required for proper expression and secretion. O-glycosylated with core 1 or possibly core 8 glycans. Thr-307 and Ser-314 are minor glycosylation sites compared to Ser-308. Glycated in plasma VLDL of normal subjects, and of hyperglycemic diabetic patients at a higher level (2-3 fold). In terms of processing, phosphorylated by FAM20C in the extracellular medium. Post-translationally, undergoes C-terminal proteolytic processing in neurons. C-terminally truncated APOE has a tendency to form neurotoxic intracellular neurofibrillary tangle-like inclusions in neurons. In terms of tissue distribution, produced by several tissues and cell types and mainly found associated with lipid particles in the plasma, the interstitial fluid and lymph. Mainly synthesized by liver hepatocytes. Significant quantities are also produced in brain, mainly by astrocytes and glial cells in the cerebral cortex, but also by neurons in frontal cortex and hippocampus. It is also expressed by cells of the peripheral nervous system. Also expressed by adrenal gland, testis, ovary, skin, kidney, spleen and adipose tissue and macrophages in various tissues.

Its subcellular location is the secreted. The protein localises to the extracellular space. The protein resides in the extracellular matrix. It localises to the extracellular vesicle. It is found in the endosome. Its subcellular location is the multivesicular body. APOE is an apolipoprotein, a protein associating with lipid particles, that mainly functions in lipoprotein-mediated lipid transport between organs via the plasma and interstitial fluids. APOE is a core component of plasma lipoproteins and is involved in their production, conversion and clearance. Apolipoproteins are amphipathic molecules that interact both with lipids of the lipoprotein particle core and the aqueous environment of the plasma. As such, APOE associates with chylomicrons, chylomicron remnants, very low density lipoproteins (VLDL) and intermediate density lipoproteins (IDL) but shows a preferential binding to high-density lipoproteins (HDL). It also binds a wide range of cellular receptors including the LDL receptor/LDLR, the LDL receptor-related proteins LRP1, LRP2 and LRP8 and the very low-density lipoprotein receptor/VLDLR that mediate the cellular uptake of the APOE-containing lipoprotein particles. Finally, APOE also has a heparin-binding activity and binds heparan-sulfate proteoglycans on the surface of cells, a property that supports the capture and the receptor-mediated uptake of APOE-containing lipoproteins by cells. A main function of APOE is to mediate lipoprotein clearance through the uptake of chylomicrons, VLDLs, and HDLs by hepatocytes. APOE is also involved in the biosynthesis by the liver of VLDLs as well as their uptake by peripheral tissues ensuring the delivery of triglycerides and energy storage in muscle, heart and adipose tissues. By participating in the lipoprotein-mediated distribution of lipids among tissues, APOE plays a critical role in plasma and tissues lipid homeostasis. APOE is also involved in two steps of reverse cholesterol transport, the HDLs-mediated transport of cholesterol from peripheral tissues to the liver, and thereby plays an important role in cholesterol homeostasis. First, it is functionally associated with ABCA1 in the biogenesis of HDLs in tissues. Second, it is enriched in circulating HDLs and mediates their uptake by hepatocytes. APOE also plays an important role in lipid transport in the central nervous system, regulating neuron survival and sprouting. APOE is also involved in innate and adaptive immune responses, controlling for instance the survival of myeloid-derived suppressor cells. Binds to the immune cell receptor LILRB4. APOE may also play a role in transcription regulation through a receptor-dependent and cholesterol-independent mechanism, that activates MAP3K12 and a non-canonical MAPK signal transduction pathway that results in enhanced AP-1-mediated transcription of APP. In terms of biological role, (Microbial infection) Through its interaction with HCV envelope glycoprotein E2, participates in the attachment of HCV to HSPGs and other receptors (LDLr, VLDLr, and SR-B1) on the cell surface and to the assembly, maturation and infectivity of HCV viral particles. This interaction is probably promoted via the up-regulation of cellular autophagy by the virus. The polypeptide is Apolipoprotein E (Homo sapiens (Human)).